The following is a 254-amino-acid chain: NFU1 iron-sulfur cluster scaffold homolog, mitochondrial (254 aa).

Residues 1-9 constitute a mitochondrion transit peptide; it reads MAATARRGW. A nifU region spans residues 173–241; it reads IKELLDTRIR…IPEVEGVEQV (69 aa). [4Fe-4S] cluster contacts are provided by Cys210 and Cys213.

Belongs to the NifU family. As to quaternary structure, monomer and homohexamer; the apo-NFU1 is a monomer, while the holo-NFU1 is a hexamer composed of a trimer of dimer that is probably linked by some 4Fe-4S cluster. Interacts with HIRA and EPM2A/laforin. Interacts with BOLA3. Interacts with HSPA9. Ubiquitous. Expression in adult lung is weak compared to fetal lung.

The protein localises to the mitochondrion. Its subcellular location is the cytoplasm. The protein resides in the cytosol. In terms of biological role, iron-sulfur cluster scaffold protein which can assemble [4Fe-4S] clusters and deliver them to target proteins. The sequence is that of NFU1 iron-sulfur cluster scaffold homolog, mitochondrial (NFU1) from Homo sapiens (Human).